The following is a 1465-amino-acid chain: MSDLFAKLMDQIEMPLDMRRSSAFSSADIIEVKVHSVSRLWEFHFAFAAVLPIATYRELHDRLIRTFEAADIKVTFDIQAAQVDYSDDLLQAYYQEAFEHAPCNSASFKSSFSKLKVTYEDDKLIIAAPGFVNNDHFRNNHLPNLVKQLEAFGFGTLTIDMVSDQEMTEHLTKNFVSSRQALVKKAVQDNLEAQKSLEAMMPPVEEATPAPKFDYKERAAKRQAGFEKATITPMIEIETEENRIVFEGMVFDVERKTTRTGRHIINFKMTDYTSSFALQKWAKDDEELRKFDMIAKGVWLRVQGNIETNPFTKSLTMNVQQVKEIVHHERKDLMPEGQKRVELHAHTNMSTMDALLTVESLIDTAAKWGHKAVAITDHANVQSFPHGYHRARKAGIKAIFGLEANIVEDKVPISYDPVDMDLHEATYVVFDVETTGLSAMNNDLIQIAASKMFKGNIVEQFDEFIDPGHPLSAFTTELTGITDKHLQGAKPLVTVLKAFQDFCKDSILVAHNASFDVGFMNANYERHDLPKITQPVIDTLEFARNLYPEYKRHGLGPLTKRFQVSLDHHHMANYDAEATGRLLFIFLKDAREKHGIKNLLQLNTDLVAEDSYKKARIKHATIYVQNQVGLKNMFKLVSLSNIKYFEGVPRIPRTVLDAHREGLLLGTACSDGEVFDAVLTKGIDAAVDLAKYYDFIEIMPPAIYQPLVVRELIKDQAGIEQVIRDLIEVGKRAKKPVLATGNVHYLEPEEEIYREIIVRSLGQGAMINRTIGRGEGAQPAPLPKAHFRTTNEMLDEFAFLGKDLAYQVVVENTQDFADRIEEVEVVKGDLYTPYIDKAEETVAELTYQKAFEIYGNPLPDIIDLRIEKELTSILGNGFAVIYLASQMLVNRSNERGYLVGSRGSVGSSFVATMIGITEVNPMPPHYVCPSCQHSEFITDGSVGSGYDLPNKACPKCGTPYQKDGQDIPFETFLGFDGDKVPDIDLNFSGDDQPSAHLDVRDIFGAEYAFRAGTVGTVAEKTAYGFVKGYERDYGKFYRDAEVDRLAAGAAGVKRTTGQHPGGIVVIPNYMDVYDFTPVQYPADDVTASWQTTHFNFHDIDENVLKLDILGHDDPTMIRKLQDLSGIDPITIPADDPGVMALFSGTEVLGVTPEQIGTPTGMLGIPEFGTNFVRGMVNETHPTTFAELLQLSGLSHGTDVWLGNAQDLIKEGIATLKTVIGCRDDIMVYLMHAGLEPKMAFTIMERVRKGLWLKISEEERNGYIDAMRENNVPDWYIESCGKIKYMFPKAHAAAYVLMALRVAYFKVHHPIMYYCAYFSIRAKAFELKTMSGGLDAVKARMEDITIKRKNNEATNVENDLFTTLEIVNEMLERGFKFGKLDLYKSDAIEFQIKGDTLIPPFIALEGLGENVAKQIVKARQEGEFLSKMELRKRGGASSTLVEKMDEMGILGNMPEDNQLSLFDDFF.

The 157-residue stretch at 427-583 folds into the Exonuclease domain; it reads YVVFDVETTG…YDAEATGRLL (157 aa).

This sequence belongs to the DNA polymerase type-C family. PolC subfamily.

The protein localises to the cytoplasm. It carries out the reaction DNA(n) + a 2'-deoxyribonucleoside 5'-triphosphate = DNA(n+1) + diphosphate. In terms of biological role, required for replicative DNA synthesis. This DNA polymerase also exhibits 3' to 5' exonuclease activity. This Streptococcus pyogenes serotype M3 (strain ATCC BAA-595 / MGAS315) protein is DNA polymerase III polC-type.